The sequence spans 968 residues: Serine/threonine-protein kinase apg-1 (968 aa).

The Protein kinase domain occupies 24-329 (FVIDQEIGKG…FEDLFNHPVV (306 aa)). ATP-binding positions include 30 to 38 (IGKGSFAKV) and K53. D167 (proton acceptor) is an active-site residue. Disordered stretches follow at residues 334–500 (PGLV…ERAA), 528–585 (MYPQ…LGTS), 884–906 (LPKR…LSDE), and 939–968 (ASKA…SVPA). Composition is skewed to basic and acidic residues over residues 350-361 (LKEERPVSRAED), 371-380 (LRKDLADREG), and 417-431 (PRED…KEAA). Polar residues-rich tracts occupy residues 441-452 (VQPSTSAPTRPS), 528-538 (MYPQQPQSPKS), and 545-557 (ATQQ…TSGA).

It belongs to the protein kinase superfamily. Ser/Thr protein kinase family. APG1/unc-51/ULK1 subfamily. Homodimer. Forms a ternary complex with ATG13 and ATG17.

It is found in the cytoplasm. The protein localises to the preautophagosomal structure membrane. The enzyme catalyses L-seryl-[protein] + ATP = O-phospho-L-seryl-[protein] + ADP + H(+). The catalysed reaction is L-threonyl-[protein] + ATP = O-phospho-L-threonyl-[protein] + ADP + H(+). Serine/threonine protein kinase involved in the cytoplasm to vacuole transport (Cvt) and found to be essential in autophagy, where it is required for the formation of autophagosomes. Involved in the clearance of protein aggregates which cannot be efficiently cleared by the proteasome. Required for selective autophagic degradation of the nucleus (nucleophagy) as well as for mitophagy which contributes to regulate mitochondrial quantity and quality by eliminating the mitochondria to a basal level to fulfill cellular energy requirements and preventing excess ROS production. Also involved in endoplasmic reticulum-specific autophagic process, in selective removal of ER-associated degradation (ERAD) substrates. Plays a key role in ATG9 and ATG23 cycling through the pre-autophagosomal structure and is necessary to promote ATG18 binding to ATG9 through phosphorylation of ATG9. Catalyzes phosphorylation of ATG4, decreasing the interaction between ATG4 and ATG8 and impairing deconjugation of PE-conjugated forms of ATG8. The polypeptide is Serine/threonine-protein kinase apg-1 (Neurospora crassa (strain ATCC 24698 / 74-OR23-1A / CBS 708.71 / DSM 1257 / FGSC 987)).